Consider the following 356-residue polypeptide: Holliday junction branch migration complex subunit RuvB (356 aa).

The interval 13–201 (SSNLSRKTRL…FGITQRLNFY (189 aa)) is large ATPase domain (RuvB-L). The tract at residues 15-35 (NLSRKTRLLDPTPSLEEGKVR) is disordered. ATP-binding positions include Leu-40, Arg-41, Gly-82, Lys-85, Thr-86, Thr-87, 148–150 (EDF), Arg-191, Tyr-201, and Arg-238. Thr-86 contributes to the Mg(2+) binding site. The tract at residues 202 to 273 (SISDLNRIIQ…LVDKSLTLHQ (72 aa)) is small ATPAse domain (RuvB-S). The head domain (RuvB-H) stretch occupies residues 276–356 (ECGLDQSDRR…NSCKNSPIIK (81 aa)). Positions 331 and 336 each coordinate DNA.

This sequence belongs to the RuvB family. As to quaternary structure, homohexamer. Forms an RuvA(8)-RuvB(12)-Holliday junction (HJ) complex. HJ DNA is sandwiched between 2 RuvA tetramers; dsDNA enters through RuvA and exits via RuvB. An RuvB hexamer assembles on each DNA strand where it exits the tetramer. Each RuvB hexamer is contacted by two RuvA subunits (via domain III) on 2 adjacent RuvB subunits; this complex drives branch migration. In the full resolvosome a probable DNA-RuvA(4)-RuvB(12)-RuvC(2) complex forms which resolves the HJ.

The protein localises to the cytoplasm. It carries out the reaction ATP + H2O = ADP + phosphate + H(+). Its function is as follows. The RuvA-RuvB-RuvC complex processes Holliday junction (HJ) DNA during genetic recombination and DNA repair, while the RuvA-RuvB complex plays an important role in the rescue of blocked DNA replication forks via replication fork reversal (RFR). RuvA specifically binds to HJ cruciform DNA, conferring on it an open structure. The RuvB hexamer acts as an ATP-dependent pump, pulling dsDNA into and through the RuvAB complex. RuvB forms 2 homohexamers on either side of HJ DNA bound by 1 or 2 RuvA tetramers; 4 subunits per hexamer contact DNA at a time. Coordinated motions by a converter formed by DNA-disengaged RuvB subunits stimulates ATP hydrolysis and nucleotide exchange. Immobilization of the converter enables RuvB to convert the ATP-contained energy into a lever motion, pulling 2 nucleotides of DNA out of the RuvA tetramer per ATP hydrolyzed, thus driving DNA branch migration. The RuvB motors rotate together with the DNA substrate, which together with the progressing nucleotide cycle form the mechanistic basis for DNA recombination by continuous HJ branch migration. Branch migration allows RuvC to scan DNA until it finds its consensus sequence, where it cleaves and resolves cruciform DNA. The protein is Holliday junction branch migration complex subunit RuvB of Prochlorococcus marinus (strain SARG / CCMP1375 / SS120).